The sequence spans 380 residues: 3-dehydroquinate synthase (380 aa).

NAD(+)-binding positions include 68–73 (PGEPNK), 102–106 (GTVLD), 126–127 (TT), lysine 139, and lysine 148. The Zn(2+) site is built by glutamate 181, histidine 243, and histidine 259.

The protein belongs to the sugar phosphate cyclases superfamily. Dehydroquinate synthase family. The cofactor is NAD(+). It depends on Co(2+) as a cofactor. Requires Zn(2+) as cofactor.

Its subcellular location is the cytoplasm. The enzyme catalyses 7-phospho-2-dehydro-3-deoxy-D-arabino-heptonate = 3-dehydroquinate + phosphate. Its pathway is metabolic intermediate biosynthesis; chorismate biosynthesis; chorismate from D-erythrose 4-phosphate and phosphoenolpyruvate: step 2/7. In terms of biological role, catalyzes the conversion of 3-deoxy-D-arabino-heptulosonate 7-phosphate (DAHP) to dehydroquinate (DHQ). This Chlamydia pneumoniae (Chlamydophila pneumoniae) protein is 3-dehydroquinate synthase (aroB).